Consider the following 233-residue polypeptide: Phosphatidylserine decarboxylase proenzyme (233 aa).

The active-site Schiff-base intermediate with substrate; via pyruvic acid is serine 190. A Pyruvic acid (Ser); by autocatalysis modification is found at serine 190.

Belongs to the phosphatidylserine decarboxylase family. PSD-A subfamily. Heterodimer of a large membrane-associated beta subunit and a small pyruvoyl-containing alpha subunit. Pyruvate serves as cofactor. Is synthesized initially as an inactive proenzyme. Formation of the active enzyme involves a self-maturation process in which the active site pyruvoyl group is generated from an internal serine residue via an autocatalytic post-translational modification. Two non-identical subunits are generated from the proenzyme in this reaction, and the pyruvate is formed at the N-terminus of the alpha chain, which is derived from the carboxyl end of the proenzyme. The post-translation cleavage follows an unusual pathway, termed non-hydrolytic serinolysis, in which the side chain hydroxyl group of the serine supplies its oxygen atom to form the C-terminus of the beta chain, while the remainder of the serine residue undergoes an oxidative deamination to produce ammonia and the pyruvoyl prosthetic group on the alpha chain.

The protein resides in the cell membrane. The catalysed reaction is a 1,2-diacyl-sn-glycero-3-phospho-L-serine + H(+) = a 1,2-diacyl-sn-glycero-3-phosphoethanolamine + CO2. The protein operates within phospholipid metabolism; phosphatidylethanolamine biosynthesis; phosphatidylethanolamine from CDP-diacylglycerol: step 2/2. Functionally, catalyzes the formation of phosphatidylethanolamine (PtdEtn) from phosphatidylserine (PtdSer). This Bartonella quintana (strain Toulouse) (Rochalimaea quintana) protein is Phosphatidylserine decarboxylase proenzyme.